A 1079-amino-acid chain; its full sequence is Extracellular calcium-sensing receptor (1079 aa).

The signal sequence occupies residues 1–19 (MAWFGYCLALLALTWHSSA). The Extracellular segment spans residues 20 to 610 (YGPDQRAQKK…KEIEFLAWTE (591 aa)). A ligand-binding 1 (LB1) region spans residues 22–188 (PDQRAQKKGD…QFKSFLRTIP (167 aa)). A disulfide bridge links cysteine 60 with cysteine 101. 66–70 (RGFRW) serves as a coordination point for phosphate. Isoleucine 81, serine 84, leucine 87, and leucine 88 together coordinate Ca(2+). The N-linked (GlcNAc...) asparagine glycan is linked to asparagine 90. Threonine 100 contributes to the Ca(2+) binding site. An N-linked (GlcNAc...) asparagine glycan is attached at asparagine 130. Residue threonine 145 coordinates Ca(2+). 3 residues coordinate L-tryptophan: serine 147, alanine 168, and serine 170. Residues serine 170, proline 188, aspartate 190, glutamate 231, and aspartate 234 each coordinate Ca(2+). A ligand-binding 2 (LB2) region spans residues 189–324 (NDEHQATAMA…GGTIGFGLKA (136 aa)). Disulfide bonds link cysteine 236/cysteine 561, cysteine 358/cysteine 395, cysteine 437/cysteine 449, cysteine 542/cysteine 562, cysteine 546/cysteine 565, cysteine 568/cysteine 582, and cysteine 585/cysteine 598. Residues aspartate 238 and serine 240 each contribute to the spermine site. Residues asparagine 261 and asparagine 287 are each glycosylated (N-linked (GlcNAc...) asparagine). Residue glutamate 297 coordinates Ca(2+). An L-tryptophan-binding site is contributed by glutamate 297. Asparagine 386 carries N-linked (GlcNAc...) asparagine glycosylation. 415 to 417 (RIS) contacts phosphate. N-linked (GlcNAc...) asparagine glycosylation is found at asparagine 446, asparagine 468, and asparagine 488. Residue tyrosine 489 participates in Ca(2+) binding. Asparagine 541 carries an N-linked (GlcNAc...) asparagine glycan. The tract at residues 542-612 (CSRDCQAGTR…IEFLAWTEPF (71 aa)) is cysteine-rich (CR). Glycine 557 is a Ca(2+) binding site. An N-linked (GlcNAc...) asparagine glycan is attached at asparagine 594. A helical membrane pass occupies residues 611–636 (PFGIALTLFAVLGIFLTAFVLGVFIK). Residues 637 to 648 (FRNTPIVKATNR) are Cytoplasmic-facing. The intracellular loop 1 (ICL1) stretch occupies residues 637-648 (FRNTPIVKATNR). The helical transmembrane segment at 649 to 668 (ELSYLLLFSLLCCFSSSLFF) threads the bilayer. Topologically, residues 669–674 (IGEPQD) are extracellular. The chain crosses the membrane as a helical span at residues 675 to 698 (WTCRLRQPAFGISFVLCISCILVK). Over 699-722 (TNRVLLVFEAKIPTSFHRKWWGLN) the chain is Cytoplasmic. Positions 699-722 (TNRVLLVFEAKIPTSFHRKWWGLN) are intracellular loop 2 (ICL2). A helical transmembrane segment spans residues 723–745 (LQFLLVFLCTFMQIVICIIWLYT). The Extracellular segment spans residues 746 to 769 (APPSSYRNHELEDEIIFITCHEGS). A helical transmembrane segment spans residues 770-789 (LMALGSLIGYTCLLAAICFF). The Cytoplasmic segment spans residues 790–805 (FAFKSRKLPENFNEAK). Positions 790–805 (FAFKSRKLPENFNEAK) are intracellular loop 3 (ICL3). A helical transmembrane segment spans residues 806-828 (FITFSMLIFFIVWISFIPAYAST). At 829 to 832 (YGKF) the chain is on the extracellular side. The helical transmembrane segment at 833 to 854 (VSAVEVIAILAASFGLLACIFF) threads the bilayer. The Cytoplasmic segment spans residues 855-1079 (NKVYIILFKP…SSVTENILHS (225 aa)). Residues 855 to 1079 (NKVYIILFKP…SSVTENILHS (225 aa)) are C-terminus. Positions 880–900 (AFKVAARATLRRPNISRKRSS) are interaction with RNF19A. Threonine 888 is modified (phosphothreonine). The segment at 890–898 (RRPNISRKR) is arginine-rich retention motif. The segment at 894–964 (ISRKRSSSLG…QQQPQQPRCK (71 aa)) is disordered. At serine 899 the chain carries Phosphoserine. Over residues 900 to 918 (SSLGGSTGSIPSSSISSKS) the composition is skewed to low complexity. The span at 919-931 (NSEDRFPQPERQK) shows a compositional bias: basic and acidic residues. Serine 920 bears the Phosphoserine mark. A compositionally biased stretch (low complexity) spans 932–961 (QQQPLALTQQEQQQQPLTLQPQQQQQPQQP). The residue at position 1062 (serine 1062) is a Phosphoserine.

Belongs to the G-protein coupled receptor 3 family. In terms of assembly, homodimer; disulfide-linked. Interacts with VCP. Interacts with ARRB1. Phosphorylation at Thr-888 by PKC impairs coupling with G(q)/G(11) G-proteins, while it does not affect G(i)/G(o)-coupling. Phosphorylation at Ser-899 by PKA promote plasma membrane localization. Post-translationally, ubiquitinated by RNF19A; which induces proteasomal degradation. In terms of tissue distribution, epidermis, kidney and cartilage.

The protein resides in the cell membrane. In resting state, adopts an open conformation, anion-binding promoting the inactive configuration. Upon aromatic amino acid-binding, the groove in the extracellular venus flytrap module is closed, thereby inducing the formation of a novel homodimer interface between subunits. Calcium ions stabilize the active state by enhancing homodimer interactions between membrane-proximal domains to fully activate the receptor. Upon activation, the homodimer adopts an asymmetric configuration of the 7-transmembrane region that primes one protomer for G-protein coupling. G-protein binding expands the transmembrane dimer interface; the restriction imposed by the receptor dimer, in combination with intracellular loop 2 (ICL2), enables G-protein activation by facilitating conformational transition of G-protein alpha. Coupling to different classes of G-proteins results in distinct CASR-G-protein interfaces. G-protein-coupled receptor that senses changes in the extracellular concentration of calcium ions and plays a key role in maintaining calcium homeostasis. Senses fluctuations in the circulating calcium concentration: activated by elevated circulating calcium, leading to decreased parathyroid hormone (PTH) secretion in parathyroid glands. In kidneys, acts as a key regulator of renal tubular calcium resorption. Ligand binding causes a conformation change that triggers signaling via guanine nucleotide-binding proteins (G-proteins) and modulates the activity of downstream effectors. CASR is coupled with different G(q)/G(11), G(i)/G(o)- or G(s)-classes of G-proteins depending on the context. In the parathyroid and kidney, CASR signals through G(q)/G(11) and G(i)/G(o) G-proteins: G(q)/G(11) coupling activates phospholipase C-beta, releasing diacylglycerol (DAG) and inositol 1,4,5-trisphosphate (IP3) second messengers, while G(i)/G(o) coupling mediates inhibition of adenylate cyclase activity. The G-protein-coupled receptor activity is activated by a co-agonist mechanism: aromatic amino acids, such as Trp or Phe, act concertedly with divalent cations, such as calcium or magnesium, to achieve full receptor activation. Acts as an activator of the NLRP3 inflammasome via G(i)/G(o)-mediated signaling: down-regulation of cyclic AMP (cAMP) relieving NLRP3 inhibition by cAMP. Acts as a regulator of proton-sensing receptor GPR68 in a seesaw manner: CASR-mediated signaling inhibits GPR68 signaling in response to extracellular calcium, while GPR68 inhibits CASR in presence of extracellular protons. The sequence is that of Extracellular calcium-sensing receptor from Mus musculus (Mouse).